A 172-amino-acid polypeptide reads, in one-letter code: RNA pyrophosphohydrolase (172 aa).

The region spanning 6-149 (GFRANVGIII…KRDVYRKVMK (144 aa)) is the Nudix hydrolase domain. Residues 38–59 (GGLDDGESAEEAMYRELYEEVG) carry the Nudix box motif.

This sequence belongs to the Nudix hydrolase family. RppH subfamily. It depends on a divalent metal cation as a cofactor.

Accelerates the degradation of transcripts by removing pyrophosphate from the 5'-end of triphosphorylated RNA, leading to a more labile monophosphorylated state that can stimulate subsequent ribonuclease cleavage. The polypeptide is RNA pyrophosphohydrolase (Shewanella denitrificans (strain OS217 / ATCC BAA-1090 / DSM 15013)).